Reading from the N-terminus, the 69-residue chain is MKQGLHPEYHHDAVVKCACGNTFTTGSTNAELKVDVCSKCHPFYTGKQKILDTGGRIEKFMKKYNLNQK.

Residues cysteine 17, cysteine 19, cysteine 37, and cysteine 40 each contribute to the Zn(2+) site.

It belongs to the bacterial ribosomal protein bL31 family. Type A subfamily. As to quaternary structure, part of the 50S ribosomal subunit. It depends on Zn(2+) as a cofactor.

In terms of biological role, binds the 23S rRNA. This chain is Large ribosomal subunit protein bL31, found in Clostridium novyi (strain NT).